Reading from the N-terminus, the 300-residue chain is D-alanine--D-alanine ligase (300 aa).

The ATP-grasp domain occupies 99-293 (KKILKYANIN…FAELLNSIVK (195 aa)). Residue 126 to 181 (IEKIGYPVFVKPNSGGSSVATNLVKNKEGIKEAVELALKYDKEVMIENYTKGEEIT) coordinates ATP. Mg(2+)-binding residues include Asp248, Glu260, and Asn262.

The protein belongs to the D-alanine--D-alanine ligase family. The cofactor is Mg(2+). It depends on Mn(2+) as a cofactor.

The protein localises to the cytoplasm. The enzyme catalyses 2 D-alanine + ATP = D-alanyl-D-alanine + ADP + phosphate + H(+). It functions in the pathway cell wall biogenesis; peptidoglycan biosynthesis. Functionally, cell wall formation. The sequence is that of D-alanine--D-alanine ligase from Clostridium botulinum (strain Loch Maree / Type A3).